Reading from the N-terminus, the 260-residue chain is Transmembrane protein 70, mitochondrial (260 aa).

The transit peptide at Met-1–Phe-81 directs the protein to the mitochondrion. Topologically, residues Leu-82–Arg-102 are mitochondrial matrix. A helical transmembrane segment spans residues Ala-103–Pro-123. The Mitochondrial intermembrane portion of the chain corresponds to Tyr-124–Gln-141. Residues Ile-142 to Ile-162 form a helical membrane-spanning segment. The Mitochondrial matrix portion of the chain corresponds to Thr-163–Lys-260.

It belongs to the TMEM70 family. As to quaternary structure, homooligomer. Interacts (homooligomer form) with ATP5MC1; this interaction facilitates the oligomer formation of subunit c/ATP5MC1 (c-ring) and the c-ring membrane insertion and also protects ATP5MC1 against intramitochondrial proteolysis. Interacts with the core subunits TMEM126B, NDUFAF1, ECSIT and ACAD9 of the MCIA complex. Interacts with ATP5MC3, TMEM242 and TIMMDC1. Lower expressed in the heart than in the liver (at protein level).

The protein localises to the mitochondrion inner membrane. In terms of biological role, scaffold protein that participates in the c-ring assembly of mitochondrial ATP synthase (F(1)F(0) ATP synthase or complex V) by facilitating the membrane insertion and oligomer formation of the subunit c/ATP5MC1 through its interaction. Therefore, participates in the early stage of mitochondrial ATP synthase biogenesis and also protects subunit c/ATP5MC1 against intramitochondrial proteolysis. In addition, binds the mitochondrial proton-transporting ATP synthase complexes I and may play a role in the stability of its membrane-bound subassemblies. The polypeptide is Transmembrane protein 70, mitochondrial (Homo sapiens (Human)).